Reading from the N-terminus, the 669-residue chain is GTP-binding protein 1 (669 aa).

A disordered region spans residues 1-32 (MAAERSRSPVDSPVPASMFAPEPSSPGAARAA). Phosphoserine occurs at positions 6, 8, 12, 24, 25, 44, 47, and 69. Residues 158–389 (FLEVRVAVVG…LNLLSPRTSY (232 aa)) form the tr-type G domain. Residues 167 to 174 (GNVDAGKS) are G1. 167-174 (GNVDAGKS) provides a ligand contact to GTP. The segment at 206-210 (GRTSS) is G2. The tract at residues 252–255 (DLAG) is G3. GTP is bound by residues 252 to 256 (DLAGH) and 308 to 311 (TKID). Residues 308–311 (TKID) are G4. The G5 stretch occupies residues 366 to 368 (SNV). Composition is skewed to polar residues over residues 573-595 (LLQTTNNSPMNSKPQQIKMQSTK) and 620-637 (DEASSLGTTQAATSSGLQ). The tract at residues 573–669 (LLQTTNNSPM…GACVTPASGC (97 aa)) is disordered. Ser-580 bears the Phosphoserine mark. The segment covering 646 to 657 (GRRRGGQRHKVK) has biased composition (basic residues).

It belongs to the TRAFAC class translation factor GTPase superfamily. Classic translation factor GTPase family. GTPBP1 subfamily. Interacts with EXOSC2/RRP4, EXOSC3/RRP40, EXOSC5/RRP46, HNRNPD, HNRNPR and SYNCRIP. Identified in a complex with HNRNPD, HNRNPL, HNRNPQ, HNRNPR, HNRNPU and AANAT mRNA, but does not bind mRNA by itself. Detected in pineal gland (at protein level).

It localises to the cytoplasm. Functionally, promotes degradation of target mRNA species. Plays a role in the regulation of circadian mRNA stability. Binds GTP and has GTPase activity. In Rattus norvegicus (Rat), this protein is GTP-binding protein 1 (Gtpbp1).